Here is a 740-residue protein sequence, read N- to C-terminus: DNA ligase (740 aa).

Positions 1-20 are disordered; sequence MGPGLTLSGMTEQSSLFPAP. NAD(+) contacts are provided by residues 56-60, 105-106, and Glu-142; these read DAEYD and SI. The active-site N6-AMP-lysine intermediate is Lys-144. NAD(+) is bound by residues Arg-165, Glu-201, Lys-322, and Lys-346. Cys-471, Cys-474, Cys-489, and Cys-495 together coordinate Zn(2+). The 87-residue stretch at 654–740 folds into the BRCT domain; sequence AATLPLAGMT…RGAPPNAGGG (87 aa).

Belongs to the NAD-dependent DNA ligase family. LigA subfamily. Mg(2+) serves as cofactor. Requires Mn(2+) as cofactor.

The catalysed reaction is NAD(+) + (deoxyribonucleotide)n-3'-hydroxyl + 5'-phospho-(deoxyribonucleotide)m = (deoxyribonucleotide)n+m + AMP + beta-nicotinamide D-nucleotide.. DNA ligase that catalyzes the formation of phosphodiester linkages between 5'-phosphoryl and 3'-hydroxyl groups in double-stranded DNA using NAD as a coenzyme and as the energy source for the reaction. It is essential for DNA replication and repair of damaged DNA. The sequence is that of DNA ligase from Acidovorax ebreus (strain TPSY) (Diaphorobacter sp. (strain TPSY)).